The primary structure comprises 161 residues: Nucleotide-binding protein Pfl01_4421 (161 aa).

It belongs to the YajQ family.

Functionally, nucleotide-binding protein. The protein is Nucleotide-binding protein Pfl01_4421 of Pseudomonas fluorescens (strain Pf0-1).